Here is a 68-residue protein sequence, read N- to C-terminus: Urocalcin (68 aa).

An N-terminal signal peptide occupies residues 1-27 (MKASTLVVIFIVIFITISSFSIHDVQA). A propeptide spanning residues 28 to 35 (SGVEKREQ) is cleaved from the precursor. 3 disulfides stabilise this stretch: cysteine 38–cysteine 52, cysteine 45–cysteine 56, and cysteine 51–cysteine 67. The tract at residues 57-59 (KRR) is essential for stimulation of [3H]ryanodine binding to RYR1.

This sequence belongs to the scorpion calcin family. As to expression, expressed by the venom gland.

It is found in the secreted. In terms of biological role, this toxin only weakly stabilizes ryanodine receptor 1 (RyR1) opening in a long-lasting subconductance state (55% of the full conductance state obtained only at high concentrations (1 uM)). In addition, it has been shown to dose-dependently stimulate ryanodine binding to RyR1 with the lowest activity of all calcins (EC(50)=376 nM). It also augments the bell-shaped calcium-[3H]ryanodine binding curve that is maximal at about 10 uM calcium concentration. It binds a different site as ryanodine. It acts synergistically with caffeine. In contrast to other calcins, it does not trigger calcium release from sarcoplasmic vesicles even at high concentration (1 uM). In vivo, intracerebroventricular injection into mice induces neurotoxic symptoms, followed by death. The sequence is that of Urocalcin from Urodacus yaschenkoi (Inland robust scorpion).